We begin with the raw amino-acid sequence, 448 residues long: Ribosomal protein uS12 methylthiotransferase RimO (448 aa).

Residues 16–126 (PKISFVSLGC…VVAAVHEAVP (111 aa)) form the MTTase N-terminal domain. 6 residues coordinate [4Fe-4S] cluster: cysteine 25, cysteine 61, cysteine 90, cysteine 157, cysteine 161, and cysteine 164. One can recognise a Radical SAM core domain in the interval 143–380 (LTPRHYAYLK…METQNGIALR (238 aa)). A TRAM domain is found at 383 to 448 (RAKVGKRLPV…EAYDLYGSVA (66 aa)).

This sequence belongs to the methylthiotransferase family. RimO subfamily. [4Fe-4S] cluster serves as cofactor.

Its subcellular location is the cytoplasm. It catalyses the reaction L-aspartate(89)-[ribosomal protein uS12]-hydrogen + (sulfur carrier)-SH + AH2 + 2 S-adenosyl-L-methionine = 3-methylsulfanyl-L-aspartate(89)-[ribosomal protein uS12]-hydrogen + (sulfur carrier)-H + 5'-deoxyadenosine + L-methionine + A + S-adenosyl-L-homocysteine + 2 H(+). Catalyzes the methylthiolation of an aspartic acid residue of ribosomal protein uS12. The polypeptide is Ribosomal protein uS12 methylthiotransferase RimO (Methylobacterium radiotolerans (strain ATCC 27329 / DSM 1819 / JCM 2831 / NBRC 15690 / NCIMB 10815 / 0-1)).